We begin with the raw amino-acid sequence, 32 residues long: Cytochrome b6-f complex subunit 6 (32 aa).

A helical transmembrane segment spans residues 4-26 (ITSYVGLLFTALGFTLGLYFGLT).

It belongs to the PetL family. In terms of assembly, the 4 large subunits of the cytochrome b6-f complex are cytochrome b6, subunit IV (17 kDa polypeptide, PetD), cytochrome f and the Rieske protein, while the 4 small subunits are PetG, PetL, PetM and PetN. The complex functions as a dimer.

It is found in the plastid. It localises to the chloroplast thylakoid membrane. Its function is as follows. Component of the cytochrome b6-f complex, which mediates electron transfer between photosystem II (PSII) and photosystem I (PSI), cyclic electron flow around PSI, and state transitions. PetL is important for photoautotrophic growth as well as for electron transfer efficiency and stability of the cytochrome b6-f complex. In Tetradesmus obliquus (Green alga), this protein is Cytochrome b6-f complex subunit 6.